Consider the following 701-residue polypeptide: Phytyl ester synthase 2, chloroplastic (701 aa).

The N-terminal 65 residues, 1 to 65, are a transit peptide targeting the chloroplast; that stretch reads MAVTVLPSVS…KNNDENRATV (65 aa). A disordered region spans residues 37–64; sequence SVTSTSSPPTPSSGVQRRRKNNDENRAT.

This sequence belongs to the diacylglycerol acyltransferase family.

It is found in the plastid. It localises to the chloroplast. The protein localises to the plastoglobule. The catalysed reaction is a 1,2-diacyl-3-O-(beta-D-galactosyl)-sn-glycerol + a 1,2-diacylglycerol = an acyl-3-O-(beta-D-galactosyl)-sn-glycerol + a triacylglycerol. It carries out the reaction a 1,2-diacylglycerol + a fatty acyl-CoA = a triacylglycerol + CoA. It catalyses the reaction a fatty acyl-[ACP] + a 1,2-diacylglycerol = a triacylglycerol + holo-[ACP]. The enzyme catalyses phytol + a fatty acyl-CoA = a fatty acid phytyl ester + CoA. The catalysed reaction is phytol + tetradecanoyl-CoA = tetradecanoate phytyl ester + CoA. It carries out the reaction a 1,3-diacylglycerol + a fatty acyl-CoA = a triacylglycerol + CoA. It catalyses the reaction 1,2-dihexanoylglycerol + tetradecanoyl-CoA = 1,2-dihexanoyl-3-tetradecanoylglycerol + CoA. The enzyme catalyses 1,2-dihexanoylglycerol + hexadecanoyl-CoA = 1,2-dihexanoyl-3-hexadecanoylglycerol + CoA. The catalysed reaction is 1,2-dihexanoylglycerol + octadecanoyl-CoA = 1,2-dihexanoyl-3-octadecanoylglycerol + CoA. It carries out the reaction (7Z,10Z,13Z)-hexadecatrienoyl-CoA + 1,2-dihexanoylglycerol = 1,2-dihexanoyl-3-(7Z,10Z,13Z-hexadecatrienoyl)-glycerol + CoA. It catalyses the reaction 1,2-dihexanoylglycerol + (9Z)-octadecenoyl-CoA = 1,2-dihexanoyl-3-(9Z-octadecenoyl)-glycerol + CoA. The enzyme catalyses 1,2-dihexanoylglycerol + (9Z,12Z,15Z)-octadecatrienoyl-CoA = 1,2-dihexanoyl-3-(9Z,12Z,15Z-octadecatrienoyl)-glycerol + CoA. The catalysed reaction is phytol + decanoyl-CoA = decanoate phytyl ester + CoA. It carries out the reaction (7Z,10Z,13Z)-hexadecatrienoyl-CoA + phytol = (7Z,10Z,13Z)-hexadecatrienoate phytyl ester + CoA. It catalyses the reaction phytol + dodecanoyl-CoA = dodecanoate phytyl ester + CoA. Its function is as follows. Acyltransferase involved in fatty acid phytyl ester synthesis in chloroplasts, a process required for the maintenance of the photosynthetic membrane integrity during abiotic stress and senescence. Exhibits phytyl ester synthesis and diacylglycerol acyltransferase activities with broad substrate specificities, and can employ acyl-CoAs, acyl carrier proteins, and galactolipids as acyl donors. The protein is Phytyl ester synthase 2, chloroplastic of Arabidopsis thaliana (Mouse-ear cress).